The sequence spans 569 residues: MKKISRKEYASMYGPTTGDKVRLGDTDLIAEVEHDYTIYGEELKFGGGKTLREGMSQSNNPSKEELDLIITNALIVDYTGIYKADIGIKDGKIAGIGKGGNKDMQDGVKNNLSVGPATEALAGEGLIVTAGGIDTHIHFISPQQIPTAFASGVTTMIGGGTGPADGTNATTITPGRRNLKFMLRAAEEYSMNIGFLAKGNASNDASLADQIEAGAIGLKIHEDWGTTPSAINHALDVADKYDVQVAIHTDTLNEAGCVEDTMAAIAGRTMHTYHTEGAGGGHAPDIIKVAGEHNILPASTNPTIPFTVNTEAEHMDMLMVCHHLDKSIKEDVQFADSRIRPQTIAAEDTLHDMGIFSITSSDSQAMGRVGEVITRTWQTADKNKKEFGRLKEEKGDNDNFRIKRYLSKYTINPAIAHGISEYVGSVEVGKVADLVLWSPAFFGVKPNMIIKGGFIALSQMGDANASIPTPQPVYYREMFAHHGKAKYDANITFVSQAAYDKGIKEELGLERQVLPVKNCRNITKKDMQFNDTTAHIEVNSETYHVFVDGKEVTSKPANKVSLAQLFSIF.

The Urease domain maps to 131–569 (GGIDTHIHFI…VSLAQLFSIF (439 aa)). H136, H138, and K219 together coordinate Ni(2+). K219 bears the N6-carboxylysine mark. Residue H221 coordinates substrate. Residues H248 and H274 each contribute to the Ni(2+) site. The active-site Proton donor is H322. D362 contributes to the Ni(2+) binding site.

The protein belongs to the metallo-dependent hydrolases superfamily. Urease alpha subunit family. As to quaternary structure, heterohexamer of 3 UreA (alpha) and 3 UreB (beta) subunits. Ni cation serves as cofactor. Carboxylation allows a single lysine to coordinate two nickel ions.

It is found in the cytoplasm. It carries out the reaction urea + 2 H2O + H(+) = hydrogencarbonate + 2 NH4(+). It participates in nitrogen metabolism; urea degradation; CO(2) and NH(3) from urea (urease route): step 1/1. This Helicobacter pylori (strain Shi470) protein is Urease subunit beta.